Consider the following 185-residue polypeptide: Ribosome-recycling factor (185 aa).

Belongs to the RRF family.

It localises to the cytoplasm. Responsible for the release of ribosomes from messenger RNA at the termination of protein biosynthesis. May increase the efficiency of translation by recycling ribosomes from one round of translation to another. This Acidothermus cellulolyticus (strain ATCC 43068 / DSM 8971 / 11B) protein is Ribosome-recycling factor.